The sequence spans 311 residues: Cytochrome f (311 aa).

A signal peptide spans 1–27 (MKHFFKSLTLAIALAASVLFWSPQAQA). Y28, C48, C51, and H52 together coordinate heme. Residues 279 to 296 (WLLVFFAAITLSQILLVL) form a helical membrane-spanning segment.

This sequence belongs to the cytochrome f family. In terms of assembly, the 4 large subunits of the cytochrome b6-f complex are cytochrome b6, subunit IV (17 kDa polypeptide, PetD), cytochrome f and the Rieske protein, while the 4 small subunits are PetG, PetL, PetM and PetN. The complex functions as a dimer. It depends on heme as a cofactor.

It is found in the cellular thylakoid membrane. Component of the cytochrome b6-f complex, which mediates electron transfer between photosystem II (PSII) and photosystem I (PSI), cyclic electron flow around PSI, and state transitions. The chain is Cytochrome f from Synechococcus elongatus.